We begin with the raw amino-acid sequence, 490 residues long: Protein nucleotidyltransferase YdiU (490 aa).

Residues Gly86, Gly88, Arg89, Lys109, Asp121, Gly122, Arg172, and Arg179 each contribute to the ATP site. Residue Asp248 is the Proton acceptor of the active site. Mg(2+)-binding residues include Asn249 and Asp258. Residue Asp258 participates in ATP binding.

The protein belongs to the SELO family. Mg(2+) serves as cofactor. Mn(2+) is required as a cofactor.

The catalysed reaction is L-seryl-[protein] + ATP = 3-O-(5'-adenylyl)-L-seryl-[protein] + diphosphate. The enzyme catalyses L-threonyl-[protein] + ATP = 3-O-(5'-adenylyl)-L-threonyl-[protein] + diphosphate. It catalyses the reaction L-tyrosyl-[protein] + ATP = O-(5'-adenylyl)-L-tyrosyl-[protein] + diphosphate. It carries out the reaction L-histidyl-[protein] + UTP = N(tele)-(5'-uridylyl)-L-histidyl-[protein] + diphosphate. The catalysed reaction is L-seryl-[protein] + UTP = O-(5'-uridylyl)-L-seryl-[protein] + diphosphate. The enzyme catalyses L-tyrosyl-[protein] + UTP = O-(5'-uridylyl)-L-tyrosyl-[protein] + diphosphate. Nucleotidyltransferase involved in the post-translational modification of proteins. It can catalyze the addition of adenosine monophosphate (AMP) or uridine monophosphate (UMP) to a protein, resulting in modifications known as AMPylation and UMPylation. The protein is Protein nucleotidyltransferase YdiU of Rhizobium meliloti (strain 1021) (Ensifer meliloti).